The primary structure comprises 172 residues: Ribosome maturation factor RimM (172 aa).

Positions 96 to 168 (DGEFYYHEII…RVDVEIPEGL (73 aa)) constitute a PRC barrel domain.

This sequence belongs to the RimM family. Binds ribosomal protein uS19.

Its subcellular location is the cytoplasm. Its function is as follows. An accessory protein needed during the final step in the assembly of 30S ribosomal subunit, possibly for assembly of the head region. Essential for efficient processing of 16S rRNA. May be needed both before and after RbfA during the maturation of 16S rRNA. It has affinity for free ribosomal 30S subunits but not for 70S ribosomes. The polypeptide is Ribosome maturation factor RimM (Streptococcus sanguinis (strain SK36)).